A 463-amino-acid polypeptide reads, in one-letter code: Protein translocase subunit SecY (463 aa).

Over 1-20 (MGFMDFLAKMGENLPAVSKP) the chain is Cytoplasmic. Residues 21-47 (KDKPTLTRKLLWTFIGLIVYLLMASIP) traverse the membrane as a helical segment. Over 48-60 (LYGVTSSNSFLSN) the chain is Extracellular. Positions 61–68 (FLAQQIIF) form an intramembrane region, helical. The chain crosses the membrane as a discontinuously helical span at residues 61-89 (FLAQQIIFASSQGTLAQLGIGPVITSGLI). An intramembrane segment occupies 69–80 (ASSQGTLAQLGI). Residues 81-89 (GPVITSGLI) constitute an intramembrane region (helical). At 90 to 110 (MQILVGSKLINVDLTTQEGKS) the chain is on the cytoplasmic side. Residues 111–134 (KFTQAEKALALIFIIVESSLFGYV) form a helical membrane-spanning segment. Residues 135–142 (FTRATSNI) lie on the Extracellular side of the membrane. Residues 143 to 167 (LLPIIVVVQLIIASYIILLLDEMIQ) form a helical membrane-spanning segment. The Cytoplasmic segment spans residues 168-174 (KGWGLGS). A helical transmembrane segment spans residues 175 to 193 (GVSLFIMAGIMKVIFWNMF). At 194–236 (GIVSVQSQNLPVGFFPLLVSYITSGRNLQEIVLNTSSTTPYQP) the chain is on the extracellular side. A helical transmembrane segment spans residues 237–258 (DLIGLIATVGLTILIVYLVNTN). The Cytoplasmic portion of the chain corresponds to 259–283 (IYIPVTTQRLRGIRTTVPLNFLYVS). A helical membrane pass occupies residues 284–305 (SIPVIFVSVLGADIQLFASLAN). Residues 306–341 (SISNSASGILTDIANAFFFPPQGVPHSVYALVVDPV) lie on the Extracellular side of the membrane. Residues 342–361 (GAAIYAAVFIVLSIVFGMLW) form a helical membrane-spanning segment. Topologically, residues 362–404 (IDVAGLDPKTQAEQMIRSGIEIPGMRTNPRIIEGILSKYIYAL) are cytoplasmic. Residues 405–423 (GFFSSLIVGLIAVVATFLG) form a helical membrane-spanning segment. Over 424 to 426 (TYG) the chain is Extracellular. A helical transmembrane segment spans residues 427 to 441 (TGVGLLLAITIAMQY). Topologically, residues 442 to 463 (YNLLAYERTLEMYPLLKRIVGE) are cytoplasmic.

It belongs to the SecY/SEC61-alpha family. In terms of assembly, component of the Sec protein translocase complex. Heterotrimer consisting of alpha (SecY), beta (SecG) and gamma (SecE) subunits. The heterotrimers can form oligomers, although 1 heterotrimer is thought to be able to translocate proteins. Interacts with the ribosome. May interact with SecDF, and other proteins may be involved.

It is found in the cell membrane. Functionally, the central subunit of the protein translocation channel SecYEG. Consists of two halves formed by TMs 1-5 and 6-10. These two domains form a lateral gate at the front which open onto the bilayer between TMs 2 and 7, and are clamped together by SecE at the back. The channel is closed by both a pore ring composed of hydrophobic SecY resides and a short helix (helix 2A) on the extracellular side of the membrane which forms a plug. The plug probably moves laterally to allow the channel to open. The ring and the pore may move independently. The protein is Protein translocase subunit SecY of Sulfolobus acidocaldarius (strain ATCC 33909 / DSM 639 / JCM 8929 / NBRC 15157 / NCIMB 11770).